The chain runs to 509 residues: uncharacterized protein (509 aa).

The RNase NYN domain occupies 358-480 (RRIVIIDAIS…IIPFIVENGE (123 aa)).

This is an uncharacterized protein from Methanocaldococcus jannaschii (strain ATCC 43067 / DSM 2661 / JAL-1 / JCM 10045 / NBRC 100440) (Methanococcus jannaschii).